The sequence spans 374 residues: Beta sliding clamp (374 aa).

Belongs to the beta sliding clamp family. Forms a ring-shaped head-to-tail homodimer around DNA which binds and tethers DNA polymerases and other proteins to the DNA. The DNA replisome complex has a single clamp-loading complex (3 tau and 1 each of delta, delta', psi and chi subunits) which binds 3 Pol III cores (1 core on the leading strand and 2 on the lagging strand) each with a beta sliding clamp dimer. Additional proteins in the replisome are other copies of gamma, psi and chi, Ssb, DNA helicase and RNA primase.

It is found in the cytoplasm. Confers DNA tethering and processivity to DNA polymerases and other proteins. Acts as a clamp, forming a ring around DNA (a reaction catalyzed by the clamp-loading complex) which diffuses in an ATP-independent manner freely and bidirectionally along dsDNA. Initially characterized for its ability to contact the catalytic subunit of DNA polymerase III (Pol III), a complex, multichain enzyme responsible for most of the replicative synthesis in bacteria; Pol III exhibits 3'-5' exonuclease proofreading activity. The beta chain is required for initiation of replication as well as for processivity of DNA replication. This is Beta sliding clamp (dnaN) from Helicobacter pylori (strain J99 / ATCC 700824) (Campylobacter pylori J99).